A 71-amino-acid polypeptide reads, in one-letter code: uncharacterized protein (71 aa).

The region spanning 5–59 (IKEFRAKFNMTQEELAKRVGVRRETIVFLEKGKYNPSLKLAYKIARVFNAKIEDI) is the HTH cro/C1-type domain. The H-T-H motif DNA-binding region spans 16–35 (QEELAKRVGVRRETIVFLEK).

This is an uncharacterized protein from Archaeoglobus fulgidus (strain ATCC 49558 / DSM 4304 / JCM 9628 / NBRC 100126 / VC-16).